A 166-amino-acid polypeptide reads, in one-letter code: Phosphopantetheine adenylyltransferase (166 aa).

Position 10 (S10) interacts with substrate. Residues S10–F11 and H18 contribute to the ATP site. Residues K42, A79, and R93 each coordinate substrate. ATP is bound by residues G94 to R96, E104, and V129 to T135.

The protein belongs to the bacterial CoaD family. In terms of assembly, homohexamer. It depends on Mg(2+) as a cofactor.

The protein resides in the cytoplasm. It carries out the reaction (R)-4'-phosphopantetheine + ATP + H(+) = 3'-dephospho-CoA + diphosphate. It participates in cofactor biosynthesis; coenzyme A biosynthesis; CoA from (R)-pantothenate: step 4/5. Its function is as follows. Reversibly transfers an adenylyl group from ATP to 4'-phosphopantetheine, yielding dephospho-CoA (dPCoA) and pyrophosphate. The protein is Phosphopantetheine adenylyltransferase of Methylobacterium nodulans (strain LMG 21967 / CNCM I-2342 / ORS 2060).